Here is a 94-residue protein sequence, read N- to C-terminus: Mobilization protein C (94 aa).

Interacts with MobA and MobB to form the relaxosome.

Its function is as follows. This protein is essential to promote the specific transfer of the plasmid in the presence of conjugative plasmids. The chain is Mobilization protein C (mobC) from Escherichia coli.